The primary structure comprises 438 residues: MTKPVVAIVGRPNVGKSTLFNRILGRQAAVVDAEPGVTRDRLYQEVDWAGRHFILVDTGGIESQAGEDMANRVFDQVRRAMAEAQLILYVLDGNAGLLEEDVQVAALLRRSSKPVLVVVNKVDDFSRPLPLADFYRLGLGEPVPVSAAQGLNIGDLLDLVVAGMPAGADEPRSEPVRIAVVGRPNVGKSSLVNAILGEERVIVSDVPGTTRDAVDTLFRRDGREYVFIDTAGMRRKARIRESIEYYSVLRAKKALERSDLALVVLDFTDGVTNQDQRIAGLAEEAGKGTIIVVNKWDLAEGSGVSASRYQEEVRRELIFIGYAPVLCVSAVSGLGVPKILDTVESVMGEYRRQIPTSMLNRILQDAFMISPPPARKGKRLKLMYCTQVATGPPAFLLFVNDPGLVSPGYRRYLENEVRRALGFKGVPVRILFRRRESK.

EngA-type G domains lie at 4–168 (PVVA…PAGA) and 176–351 (VRIA…GEYR). GTP is bound by residues 10-17 (GRPNVGKS), 57-61 (DTGGI), 120-123 (NKVD), 182-189 (GRPNVGKS), 229-233 (DTAGM), and 294-297 (NKWD). Residues 352–436 (RQIPTSMLNR…PVRILFRRRE (85 aa)) enclose the KH-like domain.

This sequence belongs to the TRAFAC class TrmE-Era-EngA-EngB-Septin-like GTPase superfamily. EngA (Der) GTPase family. In terms of assembly, associates with the 50S ribosomal subunit.

In terms of biological role, GTPase that plays an essential role in the late steps of ribosome biogenesis. This Desulforudis audaxviator (strain MP104C) protein is GTPase Der.